Reading from the N-terminus, the 310-residue chain is Lipoyl synthase (310 aa).

[4Fe-4S] cluster contacts are provided by Cys54, Cys59, Cys65, Cys80, Cys84, Cys87, and Ser295. A Radical SAM core domain is found at 66 to 284 (FASGTATFLI…LFGEDNLGFM (219 aa)).

Belongs to the radical SAM superfamily. Lipoyl synthase family. [4Fe-4S] cluster serves as cofactor.

Its subcellular location is the cytoplasm. The catalysed reaction is [[Fe-S] cluster scaffold protein carrying a second [4Fe-4S](2+) cluster] + N(6)-octanoyl-L-lysyl-[protein] + 2 oxidized [2Fe-2S]-[ferredoxin] + 2 S-adenosyl-L-methionine + 4 H(+) = [[Fe-S] cluster scaffold protein] + N(6)-[(R)-dihydrolipoyl]-L-lysyl-[protein] + 4 Fe(3+) + 2 hydrogen sulfide + 2 5'-deoxyadenosine + 2 L-methionine + 2 reduced [2Fe-2S]-[ferredoxin]. It functions in the pathway protein modification; protein lipoylation via endogenous pathway; protein N(6)-(lipoyl)lysine from octanoyl-[acyl-carrier-protein]: step 2/2. In terms of biological role, catalyzes the radical-mediated insertion of two sulfur atoms into the C-6 and C-8 positions of the octanoyl moiety bound to the lipoyl domains of lipoate-dependent enzymes, thereby converting the octanoylated domains into lipoylated derivatives. In Prochlorococcus marinus (strain MIT 9215), this protein is Lipoyl synthase.